A 476-amino-acid chain; its full sequence is tRNA(Ile)-lysidine synthase (476 aa).

ATP is bound at residue 30-35; it reads SGGPDS.

It belongs to the tRNA(Ile)-lysidine synthase family.

Its subcellular location is the cytoplasm. The enzyme catalyses cytidine(34) in tRNA(Ile2) + L-lysine + ATP = lysidine(34) in tRNA(Ile2) + AMP + diphosphate + H(+). Its function is as follows. Ligates lysine onto the cytidine present at position 34 of the AUA codon-specific tRNA(Ile) that contains the anticodon CAU, in an ATP-dependent manner. Cytidine is converted to lysidine, thus changing the amino acid specificity of the tRNA from methionine to isoleucine. This Bacillus cereus (strain ATCC 10987 / NRS 248) protein is tRNA(Ile)-lysidine synthase.